The following is a 478-amino-acid chain: Cytochrome c lysine N-methyltransferase 1 (478 aa).

In terms of domain architecture, SET spans Pro-32–Cys-284. The interval Thr-199–Phe-299 is SET-like.

The protein belongs to the class V-like SAM-binding methyltransferase superfamily.

It is found in the cytoplasm. The protein localises to the cytosol. The catalysed reaction is L-lysyl-[cytochrome c] + S-adenosyl-L-methionine = N(6)-methyl-L-lysyl-[cytochrome c] + S-adenosyl-L-homocysteine + H(+). Its function is as follows. Methyltransferase which mediates trimethylation of cytochrome c (CYC1). The sequence is that of Cytochrome c lysine N-methyltransferase 1 (CTM1) from Eremothecium gossypii (strain ATCC 10895 / CBS 109.51 / FGSC 9923 / NRRL Y-1056) (Yeast).